The following is a 1449-amino-acid chain: VWFA and cache domain-containing protein CG16868 (1449 aa).

Positions 1–23 (MWPNSNLNAVLLILAVLACPTSS) are cleaved as a signal peptide. Residues 24 to 1220 (QHVPLAMANS…NPQREQHAYS (1197 aa)) are Extracellular-facing. 6 N-linked (GlcNAc...) asparagine glycosylation sites follow: Asn32, Asn112, Asn153, Asn407, Asn447, and Asn497. In terms of domain architecture, VWFA spans 320-541 (FVLFLIDVGS…TSLPQTSSRI (222 aa)). Positions 557 to 639 (VHPPVVDADS…PRPLIQRETS (83 aa)) constitute a Cache 1 domain. 3 N-linked (GlcNAc...) asparagine glycosylation sites follow: Asn649, Asn668, and Asn707. One can recognise a Cache 2 domain in the interval 889–934 (TAPYLDAGGAGYIITIAHTIFEGKAHALHSAQQDRPVAVVALDVPY). 4 N-linked (GlcNAc...) asparagine glycosylation sites follow: Asn1015, Asn1025, Asn1059, and Asn1111. Residues 1221-1241 (AFGPLGGAIVVLVMVIGFAIY) traverse the membrane as a helical segment. The Cytoplasmic segment spans residues 1242–1449 (CYRHNLDAQT…VHRHMETAES (208 aa)). Disordered regions lie at residues 1307–1339 (YHVSSGSSYRRPPNGESDHGYSTMTPHEDSSDQ) and 1352–1416 (DKRH…GGSV). Over residues 1359–1369 (DTMSISTSISS) the composition is skewed to low complexity. Residues 1370–1392 (PTNRQQSSSQPNTHPYLSNQPTS) show a composition bias toward polar residues.

Belongs to the calcium channel subunit alpha-2/delta family.

The protein resides in the membrane. This Drosophila melanogaster (Fruit fly) protein is VWFA and cache domain-containing protein CG16868.